Here is a 507-residue protein sequence, read N- to C-terminus: Fumarate hydratase, mitochondrial (507 aa).

The transit peptide at 1-41 directs the protein to the mitochondrion; the sequence is MNRAFCLLARSRRFPRVPSAGAVLSGEAATLPRCAPNVVRM. Residues K58, K63, and K77 each carry the N6-acetyllysine; alternate modification. An N6-succinyllysine; alternate mark is found at K58, K63, and K77. Residue T82 is modified to Phosphothreonine. Residue K91 is modified to N6-acetyllysine. Residues K112 and K119 each carry the N6-acetyllysine; alternate modification. N6-succinyllysine; alternate is present on residues K112 and K119. Substrate-binding positions include 142-144, 173-176, and 183-185; these read SGT, HPND, and SSN. K210 carries the N6-acetyllysine modification. K220 carries the N6-acetyllysine; alternate modification. K220 is subject to N6-succinyllysine; alternate. T231 is a substrate binding site. Catalysis depends on H232, which acts as the Proton donor/acceptor. The residue at position 233 (T233) is a Phosphothreonine. K289 carries the N6-acetyllysine; alternate modification. The residue at position 289 (K289) is an N6-succinyllysine; alternate. Residue S362 is part of the active site. Residues S363 and 368 to 370 each bind substrate; that span reads KVN. S363 bears the Phosphoserine mark. K464 and K470 each carry N6-succinyllysine. K499 is modified (N6-acetyllysine).

It belongs to the class-II fumarase/aspartase family. Fumarase subfamily. In terms of assembly, homotetramer. Interacts with H2AZ1. Phosphorylation at Thr-233 by PRKDC in response to DNA damage promotes translocation to the nucleus and recruitment to DNA double-strand breaks (DSBs).

The protein resides in the mitochondrion. It is found in the cytoplasm. The protein localises to the cytosol. It localises to the nucleus. Its subcellular location is the chromosome. The catalysed reaction is (S)-malate = fumarate + H2O. The protein operates within carbohydrate metabolism; tricarboxylic acid cycle; (S)-malate from fumarate: step 1/1. Catalyzes the reversible stereospecific interconversion of fumarate to L-malate. Experiments in other species have demonstrated that specific isoforms of this protein act in defined pathways and favor one direction over the other. Its function is as follows. Catalyzes the hydration of fumarate to L-malate in the tricarboxylic acid (TCA) cycle to facilitate a transition step in the production of energy in the form of NADH. Functionally, catalyzes the dehydration of L-malate to fumarate. Fumarate metabolism in the cytosol plays a role during urea cycle and arginine metabolism; fumarate being a by-product of the urea cycle and amino-acid catabolism. Also plays a role in DNA repair by promoting non-homologous end-joining (NHEJ). In response to DNA damage and phosphorylation by PRKDC, translocates to the nucleus and accumulates at DNA double-strand breaks (DSBs): acts by catalyzing formation of fumarate, an inhibitor of KDM2B histone demethylase activity, resulting in enhanced dimethylation of histone H3 'Lys-36' (H3K36me2). This chain is Fumarate hydratase, mitochondrial, found in Rattus norvegicus (Rat).